A 429-amino-acid chain; its full sequence is MSLKLEVKTEIKLDYQGFQNQINEFHNRINDKNSPDINFLGWNNFPEVAINPQEIARMRKIVENLHQNSINVLVVIGIGGSYLGAKAALDFILGLGPFENKPEVIFLGNSLSSTDLYQKIEYLKTKNFAINVISKSGSTIEPAITFQILYQFLIDQIGEKLAKTRTFVTTSIKSGELLEIAKSNELEIFEVIESIGGRFSVLSSVGFFPLLFAKINVDEIIQGAIEAHKRYSTSSISQNLAYKYALFRFLMYKNFNYKTEILISYEPFLIYFNEWWKQLFGESEGKNLKGLFPASAIFTTDLHSLGQFIQDGSKNFFQTIIYIKKPKFDLGIKKIVQFNTKINKLSGKTVSEINFQAFLATTLAHSSYGNNPNLVLEIADSSPKTFGHLVMFFEKACAMSAYLLGVNPFDQPGVESYKNELAKNLGWDR.

Glu-282 (proton donor) is an active-site residue. Catalysis depends on residues His-303 and Lys-418.

This sequence belongs to the GPI family.

The protein localises to the cytoplasm. It carries out the reaction alpha-D-glucose 6-phosphate = beta-D-fructose 6-phosphate. The protein operates within carbohydrate biosynthesis; gluconeogenesis. It functions in the pathway carbohydrate degradation; glycolysis; D-glyceraldehyde 3-phosphate and glycerone phosphate from D-glucose: step 2/4. Functionally, catalyzes the reversible isomerization of glucose-6-phosphate to fructose-6-phosphate. The sequence is that of Glucose-6-phosphate isomerase from Mesomycoplasma hyopneumoniae (strain J / ATCC 25934 / NCTC 10110) (Mycoplasma hyopneumoniae).